The following is a 1213-amino-acid chain: Hybrid signal transduction histidine kinase K (1213 aa).

Disordered stretches follow at residues 1-37, 98-189, 279-392, and 495-565; these read MIELNNHSKINKNENNTNTRNNSSNNNNNNNNINKTN, NNNY…SSSS, NKNV…IPFR, and TTEQ…NYNN. 6 stretches are compositionally biased toward low complexity: residues 98–162, 171–189, 279–331, 339–371, 498–511, and 522–565; these read NNNY…QKDQ, SLSSSSSSSSLSSSSSSSS, NKNV…NSGA, NNNNNNNNNNNNNNNNNNNSNSNSNNNSKSNNN, QQQQLQQQQQQQQQ, and QRQQ…NYNN. 6 helical membrane-spanning segments follow: residues 600–618, 628–648, 652–672, 676–696, 729–749, and 768–788; these read IIFNSFNFICSIVLDGSNI, LIIGFCFTILSFIPSWIIFFW, INKPAVMAIIAMPMSISSLVI, TGSIHYPCHILCFTLCFALTI, IQWSLMVLSIYLLFFVANLYG, and IIDVTIIIMTLIFTLCYQYFI. The Histidine kinase domain maps to 822–1052; the sequence is TMSHEIRTPL…TFWFILPLEE (231 aa). Position 825 is a phosphohistidine; by autocatalysis (H825). The Response regulatory domain maps to 1076 to 1199; that stretch reads KVLIAEDNII…QLRSAIEMAI (124 aa). D1125 carries the 4-aspartylphosphate modification.

Post-translationally, activation probably requires transfer of a phosphate group between a histidine in the kinase core (transmitter) domain and an aspartate of the receiver domain.

The protein resides in the nucleus membrane. It carries out the reaction ATP + protein L-histidine = ADP + protein N-phospho-L-histidine.. Involved in a signal transduction pathway that regulates morphogenesis and controls entry into the culmination stage. May act via the regA pathway, being activated by a morphogenesis-stimulated ligand, reducing phosphodiesterase regA levels and allowing cAMP level to rise to promote the culmination stage. This protein probably undergoes an ATP-dependent autophosphorylation at a conserved histidine residue in the kinase core, and a phosphoryl group is then transferred to a conserved aspartate residue in the receiver domain. The protein is Hybrid signal transduction histidine kinase K (dhkK) of Dictyostelium discoideum (Social amoeba).